The following is a 263-amino-acid chain: Linear gramicidin dehydrogenase LgrE (263 aa).

Ser96 is a catalytic residue.

This sequence belongs to the thioesterase family.

Its function is as follows. In the final step of gramicidin biosynthesis, reduces the pentadecapeptide-aldehyde intermediate, that is released from the terminal module of the non-ribosomal peptide synthetase LgrD, to the final product ethanolamine-containing gramicidin. This is Linear gramicidin dehydrogenase LgrE (lgrE) from Brevibacillus parabrevis.